Reading from the N-terminus, the 1107-residue chain is Lon protease homolog, mitochondrial (1107 aa).

Residues 1–31 (MLSRQRIPRILASRTSLAHSIRSFTSTTSSI) constitute a mitochondrion transit peptide. 2 disordered regions span residues 32 to 152 (RPVA…PGDK) and 273 to 329 (PEAA…PYEP). Residues 51–60 (TNLSSFSTYT) are compositionally biased toward polar residues. The segment covering 80–101 (EEERKANVEHAEAEAKEAESKQ) has biased composition (basic and acidic residues). Over residues 122–141 (GAAGGSSAGSGSGADGGSGD) the composition is skewed to gly residues. The segment covering 142–152 (GGKRGRKPGDK) has biased composition (basic and acidic residues). Residues 166 to 441 (VMAIPIAKRP…KALLVLKKEH (276 aa)) form the Lon N-terminal domain. An ATP-binding site is contributed by 594-601 (GPPGVGKT). The segment at 808–858 (PESEALTEEGKAAQEETEKKKSEEAASGETSSPKAATEASEKETTEKPRVA) is disordered. Residues 815 to 831 (EEGKAAQEETEKKKSEE) are compositionally biased toward basic and acidic residues. A compositionally biased stretch (low complexity) spans 832–845 (AASGETSSPKAATE). Positions 846–856 (ASEKETTEKPR) are enriched in basic and acidic residues. Residues 891–1077 (VTPPGVTMGL…SEVFDLIFPK (187 aa)) form the Lon proteolytic domain. Residues Ser983 and Lys1026 contribute to the active site. The interval 1085–1107 (KSRIIEDDKSEKEESKKKNDDDE) is disordered.

The protein belongs to the peptidase S16 family. As to quaternary structure, homohexamer or homoheptamer. Organized in a ring with a central cavity.

It is found in the mitochondrion matrix. It catalyses the reaction Hydrolysis of proteins in presence of ATP.. In terms of biological role, ATP-dependent serine protease that mediates the selective degradation of misfolded, unassembled or oxidatively damaged polypeptides as well as certain short-lived regulatory proteins in the mitochondrial matrix. May also have a chaperone function in the assembly of inner membrane protein complexes. Participates in the regulation of mitochondrial gene expression and in the maintenance of the integrity of the mitochondrial genome. Binds to mitochondrial DNA in a site-specific manner. The sequence is that of Lon protease homolog, mitochondrial (pim1) from Neurospora crassa (strain ATCC 24698 / 74-OR23-1A / CBS 708.71 / DSM 1257 / FGSC 987).